A 134-amino-acid polypeptide reads, in one-letter code: Profilin-4 (134 aa).

Cysteines 13 and 118 form a disulfide. The Involved in PIP2 interaction signature appears at alanine 84 to threonine 100. Residue threonine 114 is modified to Phosphothreonine.

The protein belongs to the profilin family. In terms of assembly, occurs in many kinds of cells as a complex with monomeric actin in a 1:1 ratio. In terms of processing, phosphorylated by MAP kinases.

It is found in the cytoplasm. The protein resides in the cytoskeleton. Its function is as follows. Binds to actin and affects the structure of the cytoskeleton. At high concentrations, profilin prevents the polymerization of actin, whereas it enhances it at low concentrations. This chain is Profilin-4, found in Olea europaea (Common olive).